A 298-amino-acid polypeptide reads, in one-letter code: GTPase Era (298 aa).

Residues 3 to 170 (KSGFVAILGR…IKLLTDNLEE (168 aa)) enclose the Era-type G domain. Positions 11 to 18 (GRPNVGKS) are G1. 11–18 (GRPNVGKS) is a binding site for GTP. A G2 region spans residues 37-41 (QTTRN). Positions 58–61 (DTPG) are G3. GTP-binding positions include 58–62 (DTPGI) and 120–123 (NKID). Positions 120–123 (NKID) are G4. A G5 region spans residues 149-151 (ISA). The KH type-2 domain occupies 201-279 (TQQEVPHSVA…YLETWVKVKK (79 aa)).

It belongs to the TRAFAC class TrmE-Era-EngA-EngB-Septin-like GTPase superfamily. Era GTPase family. Monomer.

The protein resides in the cytoplasm. The protein localises to the cell membrane. Functionally, an essential GTPase that binds both GDP and GTP, with rapid nucleotide exchange. Plays a role in 16S rRNA processing and 30S ribosomal subunit biogenesis and possibly also in cell cycle regulation and energy metabolism. The polypeptide is GTPase Era (Streptococcus pyogenes serotype M2 (strain MGAS10270)).